We begin with the raw amino-acid sequence, 804 residues long: Leucine--tRNA ligase (804 aa).

The short motif at 39 to 50 (PFPSGKGLHVGH) is the 'HIGH' region element. A 'KMSKS' region motif is present at residues 573–577 (KMSKS). Position 576 (Lys-576) interacts with ATP.

This sequence belongs to the class-I aminoacyl-tRNA synthetase family.

Its subcellular location is the cytoplasm. It carries out the reaction tRNA(Leu) + L-leucine + ATP = L-leucyl-tRNA(Leu) + AMP + diphosphate. The polypeptide is Leucine--tRNA ligase (Lactobacillus helveticus (strain DPC 4571)).